The chain runs to 276 residues: MVLIEFLTGFFYLYGKRLFSISKVMDMICLDYYTIIPAPLAMMLAARLKNYDLMKRLHEWEISVDYALLVVDDVPSIDFCLSLGAKSPTRAQKRELLRDNTFNPVYKYLMNCSGFPTKREKNIPCDVQCERLQKNIIKELVFNCSVLLEMVLHTEREYAYALHCAAKHNQLPILMYCWQQSTDAESILLKTCCSDKNINCFNYCILYGGAQNLDAAMVEAAKHDARMLINYCVMLGGRSLNEAKETAAMFGHIECAQHCFKLQSYVMDTLNVDETD.

Belongs to the asfivirus MGF 360 family.

Plays a role in virus cell tropism, and may be required for efficient virus replication in macrophages. The polypeptide is Protein MGF 360-15R (African swine fever virus (isolate Warthog/Namibia/Wart80/1980) (ASFV)).